A 277-amino-acid chain; its full sequence is 3-methyl-2-oxobutanoate hydroxymethyltransferase (277 aa).

Asp53 and Asp96 together coordinate Mg(2+). Residues 53 to 54 (DS), Asp96, and Lys126 contribute to the 3-methyl-2-oxobutanoate site. Glu128 contributes to the Mg(2+) binding site. Glu195 acts as the Proton acceptor in catalysis.

It belongs to the PanB family. In terms of assembly, homodecamer; pentamer of dimers. Mg(2+) serves as cofactor.

Its subcellular location is the cytoplasm. It catalyses the reaction 3-methyl-2-oxobutanoate + (6R)-5,10-methylene-5,6,7,8-tetrahydrofolate + H2O = 2-dehydropantoate + (6S)-5,6,7,8-tetrahydrofolate. It functions in the pathway cofactor biosynthesis; (R)-pantothenate biosynthesis; (R)-pantoate from 3-methyl-2-oxobutanoate: step 1/2. In terms of biological role, catalyzes the reversible reaction in which hydroxymethyl group from 5,10-methylenetetrahydrofolate is transferred onto alpha-ketoisovalerate to form ketopantoate. This chain is 3-methyl-2-oxobutanoate hydroxymethyltransferase, found in Prosthecochloris aestuarii (strain DSM 271 / SK 413).